A 159-amino-acid polypeptide reads, in one-letter code: Capsid protein (159 aa).

Serine 2 is subject to N-acetylserine; by host.

This sequence belongs to the virgaviridae capsid protein family.

It is found in the virion. Its function is as follows. Capsid protein self-assembles to form rod-shaped virions about 18 nm in diameter with a central canal enclosing the viral genomic RNA. The polypeptide is Capsid protein (CP) (Nicotiana tabacum (Common tobacco)).